A 394-amino-acid chain; its full sequence is Endothelial cell-selective adhesion molecule (394 aa).

Residues Met1–Ala29 form the signal peptide. Residues Gln30–Ala251 are Extracellular-facing. Residues Pro37–Lys146 form the Ig-like V-type domain. Residues Asn111, Asn172, Asn216, and Asn239 are each glycosylated (N-linked (GlcNAc...) asparagine). An Ig-like C2-type domain is found at Pro159–Asp243. A disulfide bridge links Cys177 with Cys227. Residues Val252–Leu272 form a helical membrane-spanning segment. The Cytoplasmic portion of the chain corresponds to Leu273–Val394. At Ser304 the chain carries Phosphoserine. 2 stretches are compositionally biased toward polar residues: residues Ser304 to Ser318 and Phe335 to Ser347. The segment at Ser304 to Ser372 is disordered. 2 positions are modified to phosphothreonine: Thr336 and Thr338. Phosphoserine is present on residues Ser340, Ser343, Ser348, and Ser375.

In terms of assembly, interacts with MAGI1. In terms of tissue distribution, highly expressed in the heart and lung. Weakly expressed in the kidney and skin. Expression is restricted to the vascular endothelial cells. Expressed in the kidney, heart and tongue (at protein level). Also expressed on megakaryocytes and activated platelets.

The protein resides in the cell junction. Its subcellular location is the adherens junction. It localises to the tight junction. It is found in the cell membrane. Its function is as follows. Can mediate aggregation most likely through a homophilic molecular interaction. This Mus musculus (Mouse) protein is Endothelial cell-selective adhesion molecule (Esam).